The sequence spans 220 residues: Iron-sulfur cluster repair protein YtfE (220 aa).

It belongs to the RIC family. YtfE subfamily. Homodimer.

The protein localises to the cytoplasm. In terms of biological role, di-iron-containing protein involved in the repair of iron-sulfur clusters damaged by oxidative and nitrosative stress conditions. The polypeptide is Iron-sulfur cluster repair protein YtfE (Shigella boydii serotype 4 (strain Sb227)).